The sequence spans 364 residues: tRNA N6-adenosine threonylcarbamoyltransferase (364 aa).

Residues histidine 115 and histidine 119 each coordinate Fe cation. Residues 137-141, aspartate 170, glycine 183, and asparagine 288 contribute to the substrate site; that span reads LVSGG. Aspartate 316 provides a ligand contact to Fe cation. Residues 341–364 are disordered; sequence PRSRWPLDEKSAPLIGTGRRGTKA.

Belongs to the KAE1 / TsaD family. The cofactor is Fe(2+).

Its subcellular location is the cytoplasm. It carries out the reaction L-threonylcarbamoyladenylate + adenosine(37) in tRNA = N(6)-L-threonylcarbamoyladenosine(37) in tRNA + AMP + H(+). Its function is as follows. Required for the formation of a threonylcarbamoyl group on adenosine at position 37 (t(6)A37) in tRNAs that read codons beginning with adenine. Is involved in the transfer of the threonylcarbamoyl moiety of threonylcarbamoyl-AMP (TC-AMP) to the N6 group of A37, together with TsaE and TsaB. TsaD likely plays a direct catalytic role in this reaction. The protein is tRNA N6-adenosine threonylcarbamoyltransferase of Bartonella henselae (strain ATCC 49882 / DSM 28221 / CCUG 30454 / Houston 1) (Rochalimaea henselae).